The chain runs to 601 residues: Membrane protein insertase YidC (601 aa).

Residues 10–30 (ISISLVILVLFQVIASYVLPP) form a helical membrane-spanning segment. Residues 34–63 (APPHPATQTAQTQPVSGQPAPGVPAPSAVP) are disordered. A compositionally biased stretch (low complexity) spans 39–53 (ATQTAQTQPVSGQPA). Over residues 54-63 (PGVPAPSAVP) the composition is skewed to pro residues. 4 helical membrane passes run 382–404 (FGNMGVAIIVFTIGLKLVLFPLV), 455–475 (LPMLPQIPIFFSLYKVIFISI), 510–530 (ALSPFLHLGILPIIMGITMWG), and 549–569 (FMPVIFTFMLGRFAAGLVLYY).

The protein belongs to the OXA1/ALB3/YidC family. Type 1 subfamily. As to quaternary structure, interacts with the Sec translocase complex via SecD. Specifically interacts with transmembrane segments of nascent integral membrane proteins during membrane integration.

The protein resides in the cell inner membrane. Required for the insertion and/or proper folding and/or complex formation of integral membrane proteins into the membrane. Involved in integration of membrane proteins that insert both dependently and independently of the Sec translocase complex, as well as at least some lipoproteins. Aids folding of multispanning membrane proteins. This Acidiphilium cryptum (strain JF-5) protein is Membrane protein insertase YidC.